We begin with the raw amino-acid sequence, 492 residues long: Diacylglycerol kinase 7 (492 aa).

The region spanning 90–248 (APHAPMVVFI…SWKIVVSMPS (159 aa)) is the DAGKc domain.

Belongs to the eukaryotic diacylglycerol kinase family. In terms of assembly, monomer. In terms of tissue distribution, highly expressed in flowers, and at low levels in roots, stems and leaves.

It catalyses the reaction a 1,2-diacyl-sn-glycerol + ATP = a 1,2-diacyl-sn-glycero-3-phosphate + ADP + H(+). In terms of biological role, phosphorylates the second messenger diacylglycerol (DAG) to generate phosphatidic acid (PA), another important signaling molecule. PA is required for plant development and responses to abiotic stress and pathogen attack. May be involved in the accumulation of PA during cold stress xhibits high specificity for 1,2-dioleoyl-sn-glycerol (1,2-DOG), 1-palmitoyl, 2-oleoyl-sn-glycerol (1,2 POG), 1-stearoyl, 2-linoleoyl-sn-glycerol (1,2-SLG) and 1-oleoyl, 2-palmitoyl-sn-glycerol (1,2-OPG). The chain is Diacylglycerol kinase 7 (DGK7) from Arabidopsis thaliana (Mouse-ear cress).